The primary structure comprises 531 residues: Bifunctional protein TrpGD (531 aa).

The Glutamine amidotransferase type-1 domain occupies 3–196; sequence DILLLDNIDS…LAWAQQKLEP (194 aa). 57–59 is an L-glutamine binding site; the sequence is GPG. The active-site Nucleophile; for GATase activity is the C84. L-glutamine contacts are provided by residues Q88 and 134-135; that span reads SL. Active-site for GATase activity residues include H170 and E172. The anthranilate phosphoribosyltransferase stretch occupies residues 202–531; sequence PILEKLYQAQ…DRVTALAARG (330 aa).

The protein in the C-terminal section; belongs to the anthranilate phosphoribosyltransferase family. Monomer. Heterotetramer consisting of two non-identical subunits: a beta subunit (TrpG) and a large alpha subunit (TrpE).

It catalyses the reaction chorismate + L-glutamine = anthranilate + pyruvate + L-glutamate + H(+). The catalysed reaction is N-(5-phospho-beta-D-ribosyl)anthranilate + diphosphate = 5-phospho-alpha-D-ribose 1-diphosphate + anthranilate. Its pathway is amino-acid biosynthesis; L-tryptophan biosynthesis; L-tryptophan from chorismate: step 1/5. It functions in the pathway amino-acid biosynthesis; L-tryptophan biosynthesis; L-tryptophan from chorismate: step 2/5. Cooperatively feedback inhibited by tryptophan. Its function is as follows. Part of a heterotetrameric complex that catalyzes the two-step biosynthesis of anthranilate, an intermediate in the biosynthesis of L-tryptophan. In the first step, the glutamine-binding beta subunit (TrpG) of anthranilate synthase (AS) provides the glutamine amidotransferase activity which generates ammonia as a substrate that, along with chorismate, is used in the second step, catalyzed by the large alpha subunit of AS (TrpE) to produce anthranilate. In the absence of TrpG, TrpE can synthesize anthranilate directly from chorismate and high concentrations of ammonia. In addition to synthesizing anthranilate, it also catalyzes the second step of the pathway, the transfer of the phosphoribosyl group of 5-phosphorylribose-1-pyrophosphate (PRPP) to anthranilate. The protein is Bifunctional protein TrpGD (trpGD) of Salmonella typhimurium (strain LT2 / SGSC1412 / ATCC 700720).